The following is a 205-amino-acid chain: GTP cyclohydrolase 1 (205 aa).

Residues cysteine 95, histidine 98, and cysteine 166 each contribute to the Zn(2+) site.

It belongs to the GTP cyclohydrolase I family. As to quaternary structure, toroid-shaped homodecamer, composed of two pentamers of five dimers.

The enzyme catalyses GTP + H2O = 7,8-dihydroneopterin 3'-triphosphate + formate + H(+). Its pathway is cofactor biosynthesis; 7,8-dihydroneopterin triphosphate biosynthesis; 7,8-dihydroneopterin triphosphate from GTP: step 1/1. The sequence is that of GTP cyclohydrolase 1 from Maricaulis maris (strain MCS10) (Caulobacter maris).